We begin with the raw amino-acid sequence, 155 residues long: uncharacterized protein (155 aa).

The next 4 helical transmembrane spans lie at 2-24 (TFLF…PPIF), 62-84 (AVVN…YLVL), 97-116 (VFLI…FLVV), and 131-148 (VVLL…KVFN).

The protein localises to the cell membrane. This is an uncharacterized protein from Aquifex aeolicus (strain VF5).